Here is a 1035-residue protein sequence, read N- to C-terminus: Translation initiation factor IF-2 (1035 aa).

Positions lysine 56–lysine 66 are enriched in basic and acidic residues. Disordered stretches follow at residues lysine 56–alanine 80 and alanine 114–asparagine 402. The segment covering alanine 68–serine 78 has biased composition (polar residues). 2 stretches are compositionally biased toward basic and acidic residues: residues alanine 114–threonine 137 and leucine 146–aspartate 200. Over residues aspartate 219–glutamate 228 the composition is skewed to polar residues. The span at serine 229–aspartate 238 shows a compositional bias: basic and acidic residues. Positions asparagine 239–glutamate 253 are enriched in polar residues. The segment covering leucine 259–arginine 315 has biased composition (basic and acidic residues). Polar residues predominate over residues proline 316–lysine 325. Basic and acidic residues-rich tracts occupy residues alanine 327–lysine 347 and glutamine 354–proline 385. The tr-type G domain maps to proline 537–lysine 706. A G1 region spans residues glycine 546–threonine 553. Glycine 546–threonine 553 contributes to the GTP binding site. Positions glycine 571–histidine 575 are G2. Residues aspartate 592–glycine 595 form a G3 region. GTP contacts are provided by residues aspartate 592–histidine 596 and asparagine 646–aspartate 649. The tract at residues asparagine 646–aspartate 649 is G4. Residues serine 682–lysine 684 are G5.

The protein belongs to the TRAFAC class translation factor GTPase superfamily. Classic translation factor GTPase family. IF-2 subfamily.

Its subcellular location is the cytoplasm. Functionally, one of the essential components for the initiation of protein synthesis. Protects formylmethionyl-tRNA from spontaneous hydrolysis and promotes its binding to the 30S ribosomal subunits. Also involved in the hydrolysis of GTP during the formation of the 70S ribosomal complex. This Acetivibrio thermocellus (strain ATCC 27405 / DSM 1237 / JCM 9322 / NBRC 103400 / NCIMB 10682 / NRRL B-4536 / VPI 7372) (Clostridium thermocellum) protein is Translation initiation factor IF-2.